We begin with the raw amino-acid sequence, 289 residues long: Cyclin-dependent kinase inhibitor 4 (289 aa).

3 disordered regions span residues 1–31, 56–160, and 227–248; these read MGKY…ESSI, LQQQ…VSES, and SESN…TTPE. Gly residues predominate over residues 13–28; it reads AGAGAGGGGGGGGGGE. Residues 56–80 are compositionally biased toward low complexity; the sequence is LQQQQQRCLLQKPSSPSSLPPTSAS. Residues 134–144 show a composition bias toward polar residues; sequence CGRNPNPRSNL.

The protein belongs to the CDI family. ICK/KRP subfamily. In terms of assembly, specifically interacts with CDKA-1, but not with CDKB1-1. Interacts with CYCD4-1. Binds to FBL17. As to expression, expressed in leaves and flowers and at lower levels in roots.

Its subcellular location is the nucleus. It localises to the nucleoplasm. Functionally, binds and inhibits CYCD2-1/CDKA-1 complex kinase activity. May target specifically CDKA-1. The sequence is that of Cyclin-dependent kinase inhibitor 4 (KRP4) from Arabidopsis thaliana (Mouse-ear cress).